The chain runs to 154 residues: Large ribosomal subunit protein uL23 (154 aa).

The protein belongs to the universal ribosomal protein uL23 family.

In terms of biological role, this protein binds to a specific region on the 26S rRNA. In Fritillaria agrestis (Stinkbells), this protein is Large ribosomal subunit protein uL23 (RPL23A).